Consider the following 611-residue polypeptide: Poly(3-hydroxyalkanoate) polymerase subunit PhaC (611 aa).

The active site involves Cys349.

This sequence belongs to the PHA/PHB synthase family. Type I PhaC subfamily. In terms of assembly, monomer.

It localises to the cytoplasm. It carries out the reaction (3R)-3-hydroxybutanoyl-CoA + [(3R)-hydroxybutanoate](n) = [(3R)-hydroxybutanoate](n+1) + CoA. It functions in the pathway biopolymer metabolism; poly-(R)-3-hydroxybutanoate biosynthesis. Its function is as follows. Polymerizes D(-)-3-hydroxybutyryl-CoA to create PHB which consists of thousands of hydroxybutyrate molecules linked end to end. PHB serves as an intracellular energy reserve material when cells grow under conditions of nutrient limitation. This chain is Poly(3-hydroxyalkanoate) polymerase subunit PhaC, found in Rhizobium meliloti (strain 1021) (Ensifer meliloti).